We begin with the raw amino-acid sequence, 270 residues long: uncharacterized protein (270 aa).

Over residues 1-10 (MFGLKVKDAT) the composition is skewed to basic and acidic residues. Disordered stretches follow at residues 1-115 (MFGL…PTPW) and 215-236 (QTGF…QGEQ). 2 stretches are compositionally biased toward low complexity: residues 26 to 41 (SSSS…TQRG) and 98 to 113 (GTSP…GTPT).

It belongs to the adhesin P1 family.

This is an uncharacterized protein from Mycoplasma pneumoniae (strain ATCC 29342 / M129 / Subtype 1) (Mycoplasmoides pneumoniae).